Consider the following 246-residue polypeptide: tRNA (guanine-N(1)-)-methyltransferase (246 aa).

S-adenosyl-L-methionine contacts are provided by residues Gly113 and 133–138 (IGDYVL).

Belongs to the RNA methyltransferase TrmD family. Homodimer.

The protein localises to the cytoplasm. It catalyses the reaction guanosine(37) in tRNA + S-adenosyl-L-methionine = N(1)-methylguanosine(37) in tRNA + S-adenosyl-L-homocysteine + H(+). Specifically methylates guanosine-37 in various tRNAs. This chain is tRNA (guanine-N(1)-)-methyltransferase, found in Yersinia pseudotuberculosis serotype O:1b (strain IP 31758).